Here is a 214-residue protein sequence, read N- to C-terminus: pH-sensitive calcium channel (214 aa).

At 1 to 15 (MQATVHESKQSIMQR) the chain is on the cytoplasmic side. Residues 16–37 (ILTVFVFTLLIATVGLFIGQFV) form a helical membrane-spanning segment. Residues 38-44 (PVALMLP) lie on the Extracellular side of the membrane. A helical membrane pass occupies residues 45–59 (LSILEVAMIILAFWM). Residues 60 to 66 (RRRKAVG) lie on the Cytoplasmic side of the membrane. The chain crosses the membrane as a helical span at residues 67–86 (YAFVYTFAFVSGITLFPIVS). Residues 87–95 (HYASIAGAY) are Extracellular-facing. Residues 96–117 (VVLEAFGSTFVIFAVLGTIGAK) traverse the membrane as a helical segment. Residues 118 to 122 (MKKDL) lie on the Cytoplasmic side of the membrane. Residues 123–146 (SFLWSFLLVAVLALAVVGIFNIFS) form a helical membrane-spanning segment. Over 147-151 (PLNSA) the chain is Extracellular. A helical transmembrane segment spans residues 152–175 (AMMAYSVIGTIVFSLYILYDLNQI). Residues 176–185 (KHRHITEDLI) are Cytoplasmic-facing. The helical transmembrane segment at 186–207 (PVMALSLYLDFINLFINLLRFF) threads the bilayer. Residues 208 to 214 (GILSSDD) are Extracellular-facing.

The protein belongs to the BI1 family. In terms of assembly, monomer.

Its subcellular location is the cell membrane. It catalyses the reaction Ca(2+)(in) = Ca(2+)(out). With respect to regulation, the calcium-release activity is mediated by two factors: pH and transmembrane ion gradient. It was proposed, based on an MD simulation, that the conserved aspartyl dyad (Asp-171-Asp-195) regulates Ca(2+) binding, pH sensing, and the channel pore opening and closing, and that protonation of Asp-171 probably weakens its interaction with Arg-60, facilitating the opening of the channel. Another study using nanodiscs suggests that Asp-171 is not a pH sensor regulating the pore dynamics; instead, it is only involved in the gating of calcium ions. When crystallized in detergents at different pH conditions, the transition between open and closed conformations is regulated by pH. Ca(2+) binding is inhibited by Na(+), K(+), Li(+), Yb(3+) and Lu(3+), but not by Mg(2+) and Mn(2+). Its function is as follows. Calcium channel that probably plays a role in the regulation of calcium homeostasis. Uptakes calcium ions and mediates calcium flux in proteoliposomes in a pH-dependent manner. When expressed in E.coli in the presence of high extracellular calcium concentrations, shows calcium-leak activity, increasing intracellular calcium concentration. It can also mediate Ca(2+) flux from the endoplamic reticulum (ER) when expressed in permeabilized mammalian cells. Calcium transport activity is also detected in ER-like lipid vesicles. The polypeptide is pH-sensitive calcium channel (Bacillus subtilis (strain 168)).